Here is a 457-residue protein sequence, read N- to C-terminus: L-asparaginase-like protein GA18140 (457 aa).

Residues Met1 to Ala20 form the signal peptide. 3 cysteine pairs are disulfide-bonded: Cys72/Cys78, Cys172/Cys188, and Cys327/Cys354.

It belongs to the Ntn-hydrolase family.

This Drosophila pseudoobscura pseudoobscura (Fruit fly) protein is L-asparaginase-like protein GA18140.